A 155-amino-acid polypeptide reads, in one-letter code: Interferon gamma (155 aa).

Positions 1 to 22 (MNATHCILALQLFLMAVSGCYC) are cleaved as a signal peptide. 2 N-linked (GlcNAc...) asparagine glycosylation sites follow: Asn38 and Asn90.

The protein belongs to the type II (or gamma) interferon family. Homodimer. Interacts with IFNGR1 (via extracellular domain); this interaction promotes IFNGR1 dimerization. Released primarily from activated T lymphocytes.

It is found in the secreted. In terms of biological role, type II interferon produced by immune cells such as T-cells and NK cells that plays crucial roles in antimicrobial, antiviral, and antitumor responses by activating effector immune cells and enhancing antigen presentation. Primarily signals through the JAK-STAT pathway after interaction with its receptor IFNGR1 to affect gene regulation. Upon IFNG binding, IFNGR1 intracellular domain opens out to allow association of downstream signaling components JAK2, JAK1 and STAT1, leading to STAT1 activation, nuclear translocation and transcription of IFNG-regulated genes. Many of the induced genes are transcription factors such as IRF1 that are able to further drive regulation of a next wave of transcription. Plays a role in class I antigen presentation pathway by inducing a replacement of catalytic proteasome subunits with immunoproteasome subunits. In turn, increases the quantity, quality, and repertoire of peptides for class I MHC loading. Increases the efficiency of peptide generation also by inducing the expression of activator PA28 that associates with the proteasome and alters its proteolytic cleavage preference. Up-regulates as well MHC II complexes on the cell surface by promoting expression of several key molecules such as cathepsins B/CTSB, H/CTSH, and L/CTSL. Participates in the regulation of hematopoietic stem cells during development and under homeostatic conditions by affecting their development, quiescence, and differentiation. This chain is Interferon gamma (Ifng), found in Mus musculus (Mouse).